The chain runs to 142 residues: Hemoglobin subunit alpha-1 (142 aa).

At serine 1 the chain carries N-acetylserine. One can recognise a Globin domain in the interval 1 to 142; sequence SLSDKDKAAV…VALALAERYR (142 aa). Histidine 59 contributes to the O2 binding site. Histidine 88 contributes to the heme b binding site.

Belongs to the globin family. As to quaternary structure, hb1 is a heterotetramer of two alpha-2 chains and two beta chains, while Hb2 is a heterotetramer of two alpha-2 chains and two beta chains. As to expression, red blood cells.

Involved in oxygen transport from gills to the various peripheral tissues. This chain is Hemoglobin subunit alpha-1 (hba1), found in Notothenia angustata (Rockcod).